Here is a 688-residue protein sequence, read N- to C-terminus: DNA-directed RNA polymerase subunit beta' (688 aa).

Residues Cys-69, Cys-71, Cys-87, and Cys-90 each coordinate Zn(2+). Residues Asp-489, Asp-491, and Asp-493 each contribute to the Mg(2+) site.

The protein belongs to the RNA polymerase beta' chain family. RpoC1 subfamily. In plastids the minimal PEP RNA polymerase catalytic core is composed of four subunits: alpha, beta, beta', and beta''. When a (nuclear-encoded) sigma factor is associated with the core the holoenzyme is formed, which can initiate transcription. Mg(2+) is required as a cofactor. Requires Zn(2+) as cofactor.

It is found in the plastid. Its subcellular location is the chloroplast. The enzyme catalyses RNA(n) + a ribonucleoside 5'-triphosphate = RNA(n+1) + diphosphate. Functionally, DNA-dependent RNA polymerase catalyzes the transcription of DNA into RNA using the four ribonucleoside triphosphates as substrates. In Piper cenocladum (Ant piper), this protein is DNA-directed RNA polymerase subunit beta'.